The chain runs to 189 residues: Probable nicotinate-nucleotide adenylyltransferase (189 aa).

It belongs to the NadD family.

The catalysed reaction is nicotinate beta-D-ribonucleotide + ATP + H(+) = deamido-NAD(+) + diphosphate. Its pathway is cofactor biosynthesis; NAD(+) biosynthesis; deamido-NAD(+) from nicotinate D-ribonucleotide: step 1/1. Functionally, catalyzes the reversible adenylation of nicotinate mononucleotide (NaMN) to nicotinic acid adenine dinucleotide (NaAD). The sequence is that of Probable nicotinate-nucleotide adenylyltransferase from Bacillus anthracis (strain CDC 684 / NRRL 3495).